Consider the following 71-residue polypeptide: Beta-defensin 9 (71 aa).

The signal sequence occupies residues 1 to 23 (MRTLCSLLLICCLLFSYDTPVVG). Cystine bridges form between Cys-37/Cys-66, Cys-44/Cys-59, and Cys-49/Cys-67.

It belongs to the beta-defensin family.

Its subcellular location is the secreted. In terms of biological role, has antibacterial activity. The sequence is that of Beta-defensin 9 (Defb9) from Rattus norvegicus (Rat).